A 295-amino-acid chain; its full sequence is Acetyl-coenzyme A carboxylase carboxyl transferase subunit beta (295 aa).

Positions Met1–Lys20 are disordered. The CoA carboxyltransferase N-terminal domain maps to Leu28–Ala295. The Zn(2+) site is built by Cys32, Cys35, Cys51, and Cys54. A C4-type zinc finger spans residues Cys32–Cys54.

The protein belongs to the AccD/PCCB family. As to quaternary structure, acetyl-CoA carboxylase is a heterohexamer composed of biotin carboxyl carrier protein (AccB), biotin carboxylase (AccC) and two subunits each of ACCase subunit alpha (AccA) and ACCase subunit beta (AccD). Zn(2+) is required as a cofactor.

It is found in the cytoplasm. The catalysed reaction is N(6)-carboxybiotinyl-L-lysyl-[protein] + acetyl-CoA = N(6)-biotinyl-L-lysyl-[protein] + malonyl-CoA. Its pathway is lipid metabolism; malonyl-CoA biosynthesis; malonyl-CoA from acetyl-CoA: step 1/1. Component of the acetyl coenzyme A carboxylase (ACC) complex. Biotin carboxylase (BC) catalyzes the carboxylation of biotin on its carrier protein (BCCP) and then the CO(2) group is transferred by the transcarboxylase to acetyl-CoA to form malonyl-CoA. The sequence is that of Acetyl-coenzyme A carboxylase carboxyl transferase subunit beta from Xanthomonas campestris pv. campestris (strain B100).